We begin with the raw amino-acid sequence, 312 residues long: Olfactory receptor 4K17 (312 aa).

Residues 1–25 (MKLLNQSQVSEFILLGLTSSQDVEF) lie on the Extracellular side of the membrane. Asn-5 carries N-linked (GlcNAc...) asparagine glycosylation. Residues 26 to 49 (LLFALFSVIYVVTVLGNLLIIVTV) form a helical membrane-spanning segment. The Cytoplasmic portion of the chain corresponds to 50–57 (FNTPNLNT). Residues 58–79 (PMYFLLGNLSFVDMTLASFATP) traverse the membrane as a helical segment. Residues 80 to 100 (KVILNLLKKQKVISFAGCFTQ) lie on the Extracellular side of the membrane. Cys-97 and Cys-189 form a disulfide bridge. The chain crosses the membrane as a helical span at residues 101-120 (IFLLHLLGGVEMVLLVSMAF). Over 121 to 139 (DRYVAICKPLHYMTIMNKK) the chain is Cytoplasmic. A helical membrane pass occupies residues 140–158 (VCVLLVVTSWLLGLLHSGF). Topologically, residues 159-195 (QIPFAVNLPFCGPNVVDSIFCDLPLVTKLACIDIYFV) are extracellular. A helical membrane pass occupies residues 196–219 (QVVIVANSGIISLSCFIILLISYS). Over 220 to 235 (LILITIKNHSPTGQSK) the chain is Cytoplasmic. A helical membrane pass occupies residues 236–258 (ARSTLTAHITVVILFFGPCIFIY). The Extracellular portion of the chain corresponds to 259 to 269 (IWPFGNHSVDK). A glycan (N-linked (GlcNAc...) asparagine) is linked at Asn-264. A helical transmembrane segment spans residues 270–289 (FLAVFYTIITPILNPIIYTL). The Cytoplasmic segment spans residues 290–312 (RNKEMKISMKKLWRAFVNSREDT).

It belongs to the G-protein coupled receptor 1 family.

The protein localises to the cell membrane. In terms of biological role, odorant receptor. The protein is Olfactory receptor 4K17 (OR4K17) of Homo sapiens (Human).